We begin with the raw amino-acid sequence, 364 residues long: Protein trichome birefringence-like 40 (364 aa).

The helical; Signal-anchor for type II membrane protein transmembrane segment at 9-25 (LASLSLILFSSFPGLLA) threads the bilayer. The GDS motif signature appears at 118 to 120 (GDS). A DCXHWCLPGXXDXWN motif motif is present at residues 341-355 (DCSHWCLPGLPDTWN).

Belongs to the PC-esterase family. TBL subfamily.

The protein localises to the membrane. May act as a bridging protein that binds pectin and other cell wall polysaccharides. Probably involved in maintaining esterification of pectins. May be involved in the specific O-acetylation of cell wall polymers. The protein is Protein trichome birefringence-like 40 (TBL40) of Arabidopsis thaliana (Mouse-ear cress).